The primary structure comprises 416 residues: MTTQTFRSDFLRTLHERGYIHQCSDLERLDAKAAEGPITAYIGFDATASSLHAGHLLSIMMLRTLQRTGHNPIALMGGGTTKIGDPSGKDEARKMLTDQQIEDNIASIRKVFARFLDFGAGAKMENNASWLDELKYIPLLREVGPHFTINRMLTFDSVKLRLEREQPLTFLEFNYMILQAYDFVELNARHGCILQMGGSDQWGNIVNGMELGRRMRGADLFALTTPLLTTSSGAKMGKTAGGAVWLDADLLSPYEYWQYWRNAGDADVERFLKLFTELPLDEIARLAALEGQEINHAKEVLATEATALLHGREAAEKAKETSRATFADGALAVDLPTVEVPRATLEAGLPVAKAFVDAGLVASTSEARRQIKGGGLKVNDVTVTDEKAVIDLGALTPEGVVKLSLGKKKHVLLKPV.

Position 41 (Tyr-41) interacts with L-tyrosine. The short motif at 46–55 is the 'HIGH' region element; sequence ATASSLHAGH. L-tyrosine contacts are provided by Tyr-175 and Gln-179. The 'KMSKS' region signature appears at 235 to 239; the sequence is KMGKT. Residue Lys-238 participates in ATP binding. Positions 349–416 constitute an S4 RNA-binding domain; the sequence is LPVAKAFVDA…KKKHVLLKPV (68 aa).

The protein belongs to the class-I aminoacyl-tRNA synthetase family. TyrS type 1 subfamily. As to quaternary structure, homodimer.

The protein resides in the cytoplasm. The catalysed reaction is tRNA(Tyr) + L-tyrosine + ATP = L-tyrosyl-tRNA(Tyr) + AMP + diphosphate + H(+). In terms of biological role, catalyzes the attachment of tyrosine to tRNA(Tyr) in a two-step reaction: tyrosine is first activated by ATP to form Tyr-AMP and then transferred to the acceptor end of tRNA(Tyr). This Xanthobacter autotrophicus (strain ATCC BAA-1158 / Py2) protein is Tyrosine--tRNA ligase.